Here is a 295-residue protein sequence, read N- to C-terminus: Probable WRKY transcription factor 46 (295 aa).

The WRKY DNA-binding region spans 98 to 166 (QENGSIDDGH…YLGNHTCNNI (69 aa)).

The protein belongs to the WRKY group III family. As to quaternary structure, binds to BZR2/BES1 to cooperatively regulate the expression of target genes. In terms of processing, phosphorylated and destabilized by ASK7/BIN2. In terms of tissue distribution, expressed in guard cells, hypocotyls, and in the vascular tissues of cotyledon and root. Mostly expressed in roots, at lower levels in leaves and petioles, and, to a lower extent, in stems, flowers and siliques.

The protein localises to the nucleus. Transcription factor involved in the regulation of osmotic stress responses and stomatal movement. Interacts specifically with the W box (5'-(T)TGAC[CT]-3'), a frequently occurring elicitor-responsive cis-acting element. Positive regulator of EDS1-dependent defense against E.amylovora. Together with WRKY70 and WRKY53, promotes resistance to P.syringae, probably by enhancing salicylic acid (SA)- dependent genes. Contributes to the suppression of jasmonic acid (MeJA)-induced expression of PDF1.2. Together with WRKY54 and WRKY70, promotes brassinosteroid (BR)-regulated plant growth but prevent drought response by modulating gene expression. The sequence is that of Probable WRKY transcription factor 46 (WRKY46) from Arabidopsis thaliana (Mouse-ear cress).